The sequence spans 442 residues: tRNA(Ile)-lysidine synthase (442 aa).

30 to 35 (SGGLDS) provides a ligand contact to ATP.

Belongs to the tRNA(Ile)-lysidine synthase family.

Its subcellular location is the cytoplasm. It carries out the reaction cytidine(34) in tRNA(Ile2) + L-lysine + ATP = lysidine(34) in tRNA(Ile2) + AMP + diphosphate + H(+). Functionally, ligates lysine onto the cytidine present at position 34 of the AUA codon-specific tRNA(Ile) that contains the anticodon CAU, in an ATP-dependent manner. Cytidine is converted to lysidine, thus changing the amino acid specificity of the tRNA from methionine to isoleucine. In Pseudomonas fluorescens (strain Pf0-1), this protein is tRNA(Ile)-lysidine synthase.